The chain runs to 503 residues: ATP synthase subunit alpha (503 aa).

Gly-170–Thr-177 lines the ATP pocket.

This sequence belongs to the ATPase alpha/beta chains family. F-type ATPases have 2 components, CF(1) - the catalytic core - and CF(0) - the membrane proton channel. CF(1) has five subunits: alpha(3), beta(3), gamma(1), delta(1), epsilon(1). CF(0) has three main subunits: a(1), b(2) and c(9-12). The alpha and beta chains form an alternating ring which encloses part of the gamma chain. CF(1) is attached to CF(0) by a central stalk formed by the gamma and epsilon chains, while a peripheral stalk is formed by the delta and b chains.

It is found in the cell inner membrane. It catalyses the reaction ATP + H2O + 4 H(+)(in) = ADP + phosphate + 5 H(+)(out). Its function is as follows. Produces ATP from ADP in the presence of a proton gradient across the membrane. The alpha chain is a regulatory subunit. The chain is ATP synthase subunit alpha from Thermotoga neapolitana (strain ATCC 49049 / DSM 4359 / NBRC 107923 / NS-E).